A 185-amino-acid polypeptide reads, in one-letter code: Guanylate kinase (185 aa).

The 179-residue stretch at 3–181 folds into the Guanylate kinase-like domain; sequence TRMIIVAAPS…SYGEFKKIVE (179 aa). 10–17 is an ATP binding site; sequence APSGAGKS.

It belongs to the guanylate kinase family.

It is found in the cytoplasm. The catalysed reaction is GMP + ATP = GDP + ADP. Essential for recycling GMP and indirectly, cGMP. The chain is Guanylate kinase from Bdellovibrio bacteriovorus (strain ATCC 15356 / DSM 50701 / NCIMB 9529 / HD100).